The chain runs to 1196 residues: Nucleolar protein 6 (1196 aa).

Disordered regions lie at residues 1–74 (MPGK…NVKP) and 1140–1196 (KREQ…KALK). Basic and acidic residues-rich tracts occupy residues 22 to 31 (HAEDHSDLEH) and 65 to 74 (HRGDTKNVKP). Basic residues predominate over residues 1165-1187 (KPKKHGKRKGTGKAAPPKKKRLI).

The protein belongs to the NRAP family. As to quaternary structure, part of the small subunit (SSU) processome, composed of more than 70 proteins and the RNA chaperone small nucleolar RNA (snoRNA) U3.

It localises to the nucleus. Its subcellular location is the nucleolus. The protein resides in the chromosome. Part of the small subunit (SSU) processome, first precursor of the small eukaryotic ribosomal subunit. During the assembly of the SSU processome in the nucleolus, many ribosome biogenesis factors, an RNA chaperone and ribosomal proteins associate with the nascent pre-rRNA and work in concert to generate RNA folding, modifications, rearrangements and cleavage as well as targeted degradation of pre-ribosomal RNA by the RNA exosome. The sequence is that of Nucleolar protein 6 from Drosophila simulans (Fruit fly).